The sequence spans 641 residues: Sodium-dependent nutrient amino acid transporter 1 (641 aa).

The interval 1–34 (MELKGVQPSNGSANGNGTTNAASTEKADTEKQTA) is disordered. At 1 to 38 (MELKGVQPSNGSANGNGTTNAASTEKADTEKQTAERTN) the chain is on the cytoplasmic side. The segment covering 9 to 24 (SNGSANGNGTTNAAST) has biased composition (low complexity). The span at 25–34 (EKADTEKQTA) shows a compositional bias: basic and acidic residues. 3 consecutive transmembrane segments (helical) span residues 39–59 (WGNGLEFLMSCISVSVGLGNV), 72–92 (GAFLIPYIIVLFLIGKPMYYL), and 109–129 (SVVPGFVGVGYGQAFGTICII). N183 and N188 each carry an N-linked (GlcNAc...) asparagine glycan. 9 helical membrane-spanning segments follow: residues 229 to 249 (PDWKLTLALFVAWVVIFLVIM), 258 to 278 (AAYFLALFPYVVLFVLLIRAV), 307 to 327 (AVVQCFFSLAVGSGPIIMFAS), 341 to 361 (IVTTLDTLTSLLGGITIFAIL), 401 to 421 (LFSVLFFFMLFVLGIGSIVAL), 441 to 461 (VALITSACGFLMGLVYVTPGG), 474 to 494 (TYVVFILAIFELAGIVWVYGL), 516 to 536 (CWSFFTPVMMIIIFIYSMATI), and 552 to 572 (IAGWLLFAIGAAQFPLWGLWY).

The protein belongs to the sodium:neurotransmitter symporter (SNF) (TC 2.A.22) family.

Its subcellular location is the membrane. Functionally, unusual broad substrate spectrum amino acid:sodium cotransporter that promotes absorption of the D isomers of essential amino acids. Neutral amino acids are the preferred substrates, especially methionine and phenylalanine. This chain is Sodium-dependent nutrient amino acid transporter 1, found in Drosophila yakuba (Fruit fly).